The sequence spans 280 residues: Acyl-[acyl-carrier-protein]--UDP-N-acetylglucosamine O-acyltransferase (280 aa).

The protein belongs to the transferase hexapeptide repeat family. LpxA subfamily. Homotrimer.

It is found in the cytoplasm. The enzyme catalyses a (3R)-hydroxyacyl-[ACP] + UDP-N-acetyl-alpha-D-glucosamine = a UDP-3-O-[(3R)-3-hydroxyacyl]-N-acetyl-alpha-D-glucosamine + holo-[ACP]. The protein operates within glycolipid biosynthesis; lipid IV(A) biosynthesis; lipid IV(A) from (3R)-3-hydroxytetradecanoyl-[acyl-carrier-protein] and UDP-N-acetyl-alpha-D-glucosamine: step 1/6. Its function is as follows. Involved in the biosynthesis of lipid A, a phosphorylated glycolipid that anchors the lipopolysaccharide to the outer membrane of the cell. This chain is Acyl-[acyl-carrier-protein]--UDP-N-acetylglucosamine O-acyltransferase, found in Chlamydia trachomatis serovar L2 (strain ATCC VR-902B / DSM 19102 / 434/Bu).